We begin with the raw amino-acid sequence, 39 residues long: Cytochrome b559 subunit beta (39 aa).

The chain crosses the membrane as a helical span at residues 14–30 (WLAVHGLAVPTVFFLGS). His18 serves as a coordination point for heme.

Belongs to the PsbE/PsbF family. Heterodimer of an alpha subunit and a beta subunit. PSII is composed of 1 copy each of membrane proteins PsbA, PsbB, PsbC, PsbD, PsbE, PsbF, PsbH, PsbI, PsbJ, PsbK, PsbL, PsbM, PsbT, PsbX, PsbY, PsbZ, Psb30/Ycf12, at least 3 peripheral proteins of the oxygen-evolving complex and a large number of cofactors. It forms dimeric complexes. Requires heme b as cofactor.

The protein localises to the plastid. It localises to the chloroplast thylakoid membrane. In terms of biological role, this b-type cytochrome is tightly associated with the reaction center of photosystem II (PSII). PSII is a light-driven water:plastoquinone oxidoreductase that uses light energy to abstract electrons from H(2)O, generating O(2) and a proton gradient subsequently used for ATP formation. It consists of a core antenna complex that captures photons, and an electron transfer chain that converts photonic excitation into a charge separation. This is Cytochrome b559 subunit beta from Welwitschia mirabilis (Tree tumbo).